The sequence spans 548 residues: Chaperonin GroEL (548 aa).

ATP contacts are provided by residues 30–33 (TLGP), Lys51, 87–91 (DGTTT), Gly415, 479–481 (NAA), and Asp495.

The protein belongs to the chaperonin (HSP60) family. In terms of assembly, forms a cylinder of 14 subunits composed of two heptameric rings stacked back-to-back. Interacts with the co-chaperonin GroES.

Its subcellular location is the cytoplasm. The catalysed reaction is ATP + H2O + a folded polypeptide = ADP + phosphate + an unfolded polypeptide.. Functionally, together with its co-chaperonin GroES, plays an essential role in assisting protein folding. The GroEL-GroES system forms a nano-cage that allows encapsulation of the non-native substrate proteins and provides a physical environment optimized to promote and accelerate protein folding. The polypeptide is Chaperonin GroEL (Proteus mirabilis (strain HI4320)).